Consider the following 403-residue polypeptide: Acetyl-CoA acetyltransferase 2 (403 aa).

Cys97 acts as the Acyl-thioester intermediate in catalysis. Lys237 contributes to the CoA binding site. Ala254 lines the K(+) pocket. Ser258 is a binding site for CoA. Val355 lines the K(+) pocket. Residues His359 and Cys389 each act as proton acceptor in the active site.

It belongs to the thiolase-like superfamily. Thiolase family. In terms of tissue distribution, expressed in root tips, emerging leaves, young leaves, stems, and anthers at the microspore stage.

The protein resides in the cytoplasm. Its subcellular location is the peroxisome. The enzyme catalyses 2 acetyl-CoA = acetoacetyl-CoA + CoA. The protein operates within metabolic intermediate biosynthesis; (R)-mevalonate biosynthesis; (R)-mevalonate from acetyl-CoA: step 1/3. Its function is as follows. Catalyzes the condensation of two molecules of acetyl-CoA to produce acetoacetyl-CoA. Generates the bulk of the acetoacetyl-CoA precursor required for the cytosol-localized, mevalonate-derived isoprenoid biosynthesis. The generated isoprenoids are required for normal growth and development. Essential protein during embryogenesis. In Arabidopsis thaliana (Mouse-ear cress), this protein is Acetyl-CoA acetyltransferase 2.